Here is a 448-residue protein sequence, read N- to C-terminus: MRCVNRVDCSWSRPSEAYRILPSGGHLSSGFHQCPLSSLSFRSSFVCCSSSTSGPSDSNPESSSNRSYSRRWQNPLPRRQHPDQIPSSQIARDWIDSDTTPVSQALERFTVVSYNILGDGNSSYHRELYSNVSVPYLKWGYRKRLICEELIRLNPDIISMQEVDKYFDLFSMMEKAGYAGSYKRRTGDNVDGCAMFWKADRFGVLERENIEFSQFGMRDNVAQLAVLELRKSNKSRKILLGNIHVLYNPNQGDVKLGQVRSLCSKAHLLSKKWGDIPIVLCGDFNSTPKSPLYNFLASSELNVMEHDKKELSGQKNCRPTKVLETGSKSSNTITFSFCSSWTKEEIRVATGQENSYWAAHPLKLNSSYASVKGSANTRDSVGEPLATSYHSKFLGTVDYLWYSDGLLPARVLDTLPIDVLCKTKGLPCQELGSDHLALVSEFVFEPDG.

The span at Ser-50–Ser-67 shows a compositional bias: low complexity. The tract at residues Ser-50–Arg-92 is disordered. Glu-162 is a binding site for Mg(2+).

It belongs to the CCR4/nocturin family. As to quaternary structure, component of the CCR4-NOT complex, at least composed of CRR4 and CAF1 proteins. It depends on Mg(2+) as a cofactor.

It is found in the nucleus. Its subcellular location is the cytoplasm. The enzyme catalyses Exonucleolytic cleavage of poly(A) to 5'-AMP.. In terms of biological role, acts as a catalytic component of the CCR4-NOT core complex, which in the nucleus seems to be a general transcription factor, and in the cytoplasm the major mRNA deadenylase involved in mRNA turnover. The protein is Carbon catabolite repressor protein 4 homolog 3 (CCR4-3) of Arabidopsis thaliana (Mouse-ear cress).